A 71-amino-acid chain; its full sequence is Large ribosomal subunit protein bL31 (71 aa).

The protein belongs to the bacterial ribosomal protein bL31 family. Type A subfamily. Part of the 50S ribosomal subunit.

In terms of biological role, binds the 23S rRNA. The sequence is that of Large ribosomal subunit protein bL31 from Metamycoplasma arthritidis (strain 158L3-1) (Mycoplasma arthritidis).